The primary structure comprises 528 residues: Protein phosphatase 1 regulatory subunit 16A (528 aa).

The stretch at 18–45 forms a coiled coil; the sequence is STQERLKHAQKRRAQQVKMWAQAEKEAQ. The segment at 19–59 is disordered; sequence TQERLKHAQKRRAQQVKMWAQAEKEAQGKKGPGERPRKEAA. The segment covering 40–58 has biased composition (basic and acidic residues); the sequence is AEKEAQGKKGPGERPRKEA. 5 ANK repeats span residues 70–99, 103–132, 136–165, 231–260, and 264–293; these read PPSV…SPDL, DGLT…NINA, ECWT…NLLA, HGAT…SLSA, and DGWE…DLNA. 2 disordered regions span residues 330-351 and 367-421; these read RQRS…VVRR and QEAI…SPVR. Serine 433 bears the Phosphoserine mark. Residues 462–505 are disordered; that stretch reads QRAAAKLQRPPPEGPESPETAEPGLPGDTVTPQPDCGFRAGGDP. Cysteine 524 carries the S-palmitoyl cysteine lipid modification. Cysteine 525 is modified (cysteine methyl ester). A lipid anchor (S-farnesyl cysteine) is attached at cysteine 525. The propeptide at 526–528 is removed in mature form; sequence LLM.

In terms of assembly, binds PP1.

It localises to the cell membrane. In terms of biological role, inhibits protein phosphatase 1 activity toward phosphorylase, myosin light chain and myosin substrates. The chain is Protein phosphatase 1 regulatory subunit 16A (PPP1R16A) from Homo sapiens (Human).